The primary structure comprises 196 residues: Corrinoid adenosyltransferase (196 aa).

Residue 36–42 (GNGKGKT) participates in ATP binding.

The protein belongs to the Cob(I)alamin adenosyltransferase family.

It is found in the cytoplasm. It catalyses the reaction 2 cob(II)yrinate a,c diamide + reduced [electron-transfer flavoprotein] + 2 ATP = 2 adenosylcob(III)yrinate a,c-diamide + 2 triphosphate + oxidized [electron-transfer flavoprotein] + 3 H(+). The enzyme catalyses 2 cob(II)alamin + reduced [electron-transfer flavoprotein] + 2 ATP = 2 adenosylcob(III)alamin + 2 triphosphate + oxidized [electron-transfer flavoprotein] + 3 H(+). It participates in cofactor biosynthesis; adenosylcobalamin biosynthesis; adenosylcobalamin from cob(II)yrinate a,c-diamide: step 2/7. Required for both de novo synthesis of the corrin ring for the assimilation of exogenous corrinoids. Participates in the adenosylation of a variety of incomplete and complete corrinoids. This chain is Corrinoid adenosyltransferase (btuR), found in Escherichia coli O6:H1 (strain CFT073 / ATCC 700928 / UPEC).